The sequence spans 764 residues: Phosphoribosylformylglycinamidine synthase subunit PurL (764 aa).

Residues 1 to 23 form a disordered region; that stretch reads MTQEVDTVERAAATPDHPQPYRE. His-57 is an active-site residue. ATP-binding residues include Tyr-60 and Lys-104. Residue Glu-106 coordinates Mg(2+). Substrate contacts are provided by residues 107–110 and Arg-129; that span reads SHNH. The active-site Proton acceptor is His-108. Residue Asp-130 coordinates Mg(2+). A substrate-binding site is contributed by Gln-258. Asp-286 provides a ligand contact to Mg(2+). 330–332 is a binding site for substrate; that stretch reads ESQ. Asn-518 and Gly-555 together coordinate ATP. Asn-556 lines the Mg(2+) pocket. Ser-558 contacts substrate.

The protein belongs to the FGAMS family. Monomer. Part of the FGAM synthase complex composed of 1 PurL, 1 PurQ and 2 PurS subunits.

The protein resides in the cytoplasm. The enzyme catalyses N(2)-formyl-N(1)-(5-phospho-beta-D-ribosyl)glycinamide + L-glutamine + ATP + H2O = 2-formamido-N(1)-(5-O-phospho-beta-D-ribosyl)acetamidine + L-glutamate + ADP + phosphate + H(+). Its pathway is purine metabolism; IMP biosynthesis via de novo pathway; 5-amino-1-(5-phospho-D-ribosyl)imidazole from N(2)-formyl-N(1)-(5-phospho-D-ribosyl)glycinamide: step 1/2. Its function is as follows. Part of the phosphoribosylformylglycinamidine synthase complex involved in the purines biosynthetic pathway. Catalyzes the ATP-dependent conversion of formylglycinamide ribonucleotide (FGAR) and glutamine to yield formylglycinamidine ribonucleotide (FGAM) and glutamate. The FGAM synthase complex is composed of three subunits. PurQ produces an ammonia molecule by converting glutamine to glutamate. PurL transfers the ammonia molecule to FGAR to form FGAM in an ATP-dependent manner. PurS interacts with PurQ and PurL and is thought to assist in the transfer of the ammonia molecule from PurQ to PurL. This chain is Phosphoribosylformylglycinamidine synthase subunit PurL, found in Mycolicibacterium vanbaalenii (strain DSM 7251 / JCM 13017 / BCRC 16820 / KCTC 9966 / NRRL B-24157 / PYR-1) (Mycobacterium vanbaalenii).